The sequence spans 499 residues: Maturase K (499 aa).

It belongs to the intron maturase 2 family. MatK subfamily.

The protein resides in the plastid. It is found in the chloroplast. Usually encoded in the trnK tRNA gene intron. Probably assists in splicing its own and other chloroplast group II introns. In Gymnocladus dioicus (Kentucky coffee tree), this protein is Maturase K.